A 1383-amino-acid polypeptide reads, in one-letter code: Spike glycoprotein (1383 aa).

The signal sequence occupies residues 1 to 25 (MRSLIYFWLLLPVLPTLSLPQDVTR). Positions 26–734 (CQSTTNFRRF…TRELPGFFYH (709 aa)) are S1. At 26–1324 (CQSTTNFRRF…NRVETYIKWP (1299 aa)) the chain is on the virion surface side. Residues 617–745 (FQFTKGELIT…NDGSNCTEPV (129 aa)) form an interaction with host ANPEP region. The tract at residues 735-1383 (SNDGSNCTEP…YEAFEKVHVQ (649 aa)) is S2. The tract at residues 955–975 (IGGMALGGITAAAALPFSYAV) is fusion peptide. The segment at 969 to 1088 (LPFSYAVQAR…QVDRLITGRL (120 aa)) is heptad repeat 1 (HR1). Coiled coils occupy residues 1036–1080 (QEVV…DVQV) and 1272–1314 (TYLN…LEWL). A heptad repeat 2 (HR2) region spans residues 1240-1336 (PDYIDVNKTL…VWLIIVIVLI (97 aa)). Residues 1325–1344 (WWVWLIIVIVLIFVVSLLVF) form a helical membrane-spanning segment. Over 1345–1383 (CCISTGCCGCCGCCGACFSGCCRGPRLQPYEAFEKVHVQ) the chain is Intravirion. Residues 1379-1383 (KVHVQ) carry the KxHxx motif.

It belongs to the alphacoronaviruses spike protein family. Homotrimer. During virus morphogenesis, found in a complex with M and HE proteins. Interacts with host ANPEP.

Its subcellular location is the virion membrane. The protein localises to the host endoplasmic reticulum-Golgi intermediate compartment membrane. S1 region attaches the virion to the cell membrane by interacting with host ANPEP/aminopeptidase N, initiating the infection. Binding to the receptor probably induces conformational changes in the S glycoprotein unmasking the fusion peptide of S2 region and activating membranes fusion. S2 region belongs to the class I viral fusion protein. Under the current model, the protein has at least 3 conformational states: pre-fusion native state, pre-hairpin intermediate state, and post-fusion hairpin state. During viral and target cell membrane fusion, the coiled coil regions (heptad repeats) regions assume a trimer-of-hairpins structure, positioning the fusion peptide in close proximity to the C-terminal region of the ectodomain. The formation of this structure appears to drive apposition and subsequent fusion of viral and target cell membranes. In Porcine epidemic diarrhea virus (strain CV777) (PEDV), this protein is Spike glycoprotein.